Here is a 343-residue protein sequence, read N- to C-terminus: N-acetyl-gamma-glutamyl-phosphate reductase (343 aa).

Residue Cys147 is part of the active site.

This sequence belongs to the NAGSA dehydrogenase family. Type 1 subfamily.

It is found in the cytoplasm. It catalyses the reaction N-acetyl-L-glutamate 5-semialdehyde + phosphate + NADP(+) = N-acetyl-L-glutamyl 5-phosphate + NADPH + H(+). It functions in the pathway amino-acid biosynthesis; L-arginine biosynthesis; N(2)-acetyl-L-ornithine from L-glutamate: step 3/4. Catalyzes the NADPH-dependent reduction of N-acetyl-5-glutamyl phosphate to yield N-acetyl-L-glutamate 5-semialdehyde. This chain is N-acetyl-gamma-glutamyl-phosphate reductase, found in Listeria welshimeri serovar 6b (strain ATCC 35897 / DSM 20650 / CCUG 15529 / CIP 8149 / NCTC 11857 / SLCC 5334 / V8).